A 97-amino-acid polypeptide reads, in one-letter code: UPF0147 protein MA_0092 (97 aa).

It belongs to the UPF0147 family.

The polypeptide is UPF0147 protein MA_0092 (Methanosarcina acetivorans (strain ATCC 35395 / DSM 2834 / JCM 12185 / C2A)).